A 139-amino-acid polypeptide reads, in one-letter code: MLVPRRVKWRKSHAPKRKGFAKGGTRINFGEYGIQAIEHGYVTNRQIESARIAITRHVKRGGKVWINIFPDRPLTKKPAETRQGSGKGSPESWVANVKPGRVMFELNFPNEKTAIEALTRAAHKLPMKCKIVSREAGDF.

A disordered region spans residues 74-94; sequence LTKKPAETRQGSGKGSPESWV.

This sequence belongs to the universal ribosomal protein uL16 family. Part of the 50S ribosomal subunit.

Functionally, binds 23S rRNA and is also seen to make contacts with the A and possibly P site tRNAs. This is Large ribosomal subunit protein uL16 from Saccharopolyspora erythraea (strain ATCC 11635 / DSM 40517 / JCM 4748 / NBRC 13426 / NCIMB 8594 / NRRL 2338).